A 241-amino-acid chain; its full sequence is Large ribosomal subunit protein uL2 (241 aa).

Basic residues predominate over residues 1-12 (MGKRLISQRRGR). Disordered stretches follow at residues 1 to 21 (MGKR…RSAS) and 200 to 241 (AVDH…GKRR).

The protein belongs to the universal ribosomal protein uL2 family. In terms of assembly, part of the 50S ribosomal subunit. Forms a bridge to the 30S subunit in the 70S ribosome.

In terms of biological role, one of the primary rRNA binding proteins. Required for association of the 30S and 50S subunits to form the 70S ribosome, for tRNA binding and peptide bond formation. It has been suggested to have peptidyltransferase activity; this is somewhat controversial. Makes several contacts with the 16S rRNA in the 70S ribosome. The sequence is that of Large ribosomal subunit protein uL2 from Methanothermobacter thermautotrophicus (strain ATCC 29096 / DSM 1053 / JCM 10044 / NBRC 100330 / Delta H) (Methanobacterium thermoautotrophicum).